We begin with the raw amino-acid sequence, 260 residues long: Uroplakin-1b (260 aa).

The Cytoplasmic portion of the chain corresponds to 1–15 (MAKDNSTVRCFQGLL). Residues 16-36 (IFGNVIIGCCGIALTAECIFF) form a helical membrane-spanning segment. The Extracellular segment spans residues 37-60 (VSDQHSLYPLLEATDNDDIYGAAW). A helical transmembrane segment spans residues 61–81 (IGIFVGICLFCLSVLGIVGIM). Residues 82–86 (KSSRK) lie on the Cytoplasmic side of the membrane. The helical transmembrane segment at 87 to 107 (ILLAYFILMFIVYAFEVASCI) threads the bilayer. Over 108–229 (TAATQQDFFT…ELISGPMNRH (122 aa)) the chain is Extracellular. Residues 230–250 (AWGVAWFGFAILCWTFWVLLG) form a helical membrane-spanning segment. The Cytoplasmic segment spans residues 251–260 (TMFYWSRIEY).

Belongs to the tetraspanin (TM4SF) family. Heterodimer with uroplakin-3A (UPK3A) or uroplakin-3B (UPK3B). N-glycosylated with high-mannose oligosaccharides. In terms of tissue distribution, bladder epithelium.

The protein resides in the membrane. Functionally, component of the asymmetric unit membrane (AUM); a highly specialized biomembrane elaborated by terminally differentiated urothelial cells. May play an important role in normal bladder epithelial physiology, possibly in regulating membrane permeability of superficial umbrella cells or in stabilizing the apical membrane through AUM/cytoskeletal interactions. The chain is Uroplakin-1b (UPK1B) from Homo sapiens (Human).